The chain runs to 159 residues: C-type lectin BJcuL (159 aa).

The signal sequence occupies residues 1-24 (MGRFLFVASSACWFVFLSLSGAKG). Intrachain disulfides connect cysteine 27/cysteine 38, cysteine 55/cysteine 155, cysteine 62/cysteine 157, and cysteine 130/cysteine 147. The 123-residue stretch at 34 to 156 (MNGLCYKIFN…CESKNAFLCQ (123 aa)) folds into the C-type lectin domain. Ca(2+) contacts are provided by glutamine 120, aspartate 122, glutamate 128, asparagine 143, and aspartate 144. Positions 120 to 122 (QPD) match the Galactose-binding motif.

Belongs to the true venom lectin family. As to quaternary structure, homodecamer of disulfide-linked dimers arranged in two 5-fold symmetric pentamers. Binds the gentamicin group of aminoglycoside antibiotics at the dimeric interface near the intermolecular disulfide bond. As to expression, expressed by the venom gland.

It localises to the secreted. Its activity is regulated as follows. Hemagglutination activity is inhibited by lactose (MIC=2.5 mM), galactose (MIC=10 mM), and raffinose. Is very weakly or not inhibited by gentamicin, kanamycin, glucose and sucrose. In terms of biological role, galactose-binding lectin which recognizes specific carbohydrate structures and agglutinates a variety of animal cells by binding to cell-surface glycoproteins and glycolipids. Calcium-dependent lectin. Also binds lactose and raffinose. Shows high hemagglutinating activity on mammalian erythrocytes. It also involved in immunological functions, since it is able of inducing potent neutrophil activation. In vivo, it causes edema and increases vascular permeability after injection into mouse hind paws (10-100 ug/paw). In anesthetized rats, it decreases the blood pressure by approximately 15%, with a rapid return to the resting level. Is an effective inhibitor of cell growth in some cancer cell lines, especially against renal and pancreatic cancer cell lines, human breast and ovarian carcinoma, glioblastoma and a bovine brain microvascular endothelial cell line. This Bothrops jararacussu (Jararacussu) protein is C-type lectin BJcuL.